A 312-amino-acid polypeptide reads, in one-letter code: Putative HTH-type transcriptional regulatory protein Ta1363 (312 aa).

Positions 133–186 constitute an HTH cro/C1-type domain; sequence LREMRMKMSLSIGYLSHYLGVSRRSVSLYENGSSATIDVFLKLQEIIKSDLVDH. Residues 144–163 constitute a DNA-binding region (H-T-H motif); that stretch reads IGYLSHYLGVSRRSVSLYEN.

This is Putative HTH-type transcriptional regulatory protein Ta1363 from Thermoplasma acidophilum (strain ATCC 25905 / DSM 1728 / JCM 9062 / NBRC 15155 / AMRC-C165).